Reading from the N-terminus, the 137-residue chain is MLQPKRTKYRKQFKGRIKGVAKGGSDLAFGEFGLKSQEPNRVNAREIEAARRAITRYMKRAGRVWIRVFPDVPVTAKPTEVRMGKGKGSVEYWACKVKPGRMMFEIDGVSEEIAREALRLGAAKLSVKTRFVQRIAE.

It belongs to the universal ribosomal protein uL16 family. As to quaternary structure, part of the 50S ribosomal subunit.

In terms of biological role, binds 23S rRNA and is also seen to make contacts with the A and possibly P site tRNAs. This is Large ribosomal subunit protein uL16 from Rhizobium rhizogenes (strain K84 / ATCC BAA-868) (Agrobacterium radiobacter).